The chain runs to 818 residues: Exchange factor for Arf-6 (818 aa).

4 disordered regions span residues 92–123 (AQKLSRLPVPVSTSQIERRGSLARKTSEESSP), 137–168 (MESTDVEESEEETVMMTTDEKENQKKPNENDD), 208–291 (NHHH…GVSN), and 326–383 (RTTP…VGGE). Residues 107–119 (IERRGSLARKTSE) show a composition bias toward basic and acidic residues. A compositionally biased stretch (acidic residues) spans 140–149 (TDVEESEEET). Basic and acidic residues predominate over residues 154 to 165 (TDEKENQKKPNE). Composition is skewed to polar residues over residues 213–223 (YNSSPQISTLS) and 255–269 (MSNNSHQQSFRSPEN). A compositionally biased stretch (low complexity) spans 326–347 (RTTPNTAASNSSASASPSLHAT). In terms of domain architecture, SEC7 spans 356-532 (GVSLRSAESS…KTLFQSIKDN (177 aa)). The segment covering 361 to 380 (SAESSNLNQTAVPSTSTNSV) has biased composition (polar residues). The region spanning 569 to 681 (VEYYSGFLMR…WCEKINFVAA (113 aa)) is the PH domain. Positions 782–799 (TMNIMMTPTRRQQQNQKP) are enriched in polar residues. The interval 782–818 (TMNIMMTPTRRQQQNQKPVVSEDRLSYTDAVNGAAAH) is disordered.

Interacts (via short N-terminal region) with microtubule-associated proteins tac-1 and zyg-8.

It is found in the cytoplasm. It localises to the cell cortex. The protein resides in the cell membrane. In terms of biological role, guanine nucleotide exchange factor for arf-6. Involved in response to injury in mechanosensory neurons. Inhibits axon regrowth via microtubule dynamics, possibly by inducing axonal microtubule catastrophes. Limits microtubule growth near the cellular cortex of early embryonic cells. This is Exchange factor for Arf-6 from Caenorhabditis elegans.